The following is a 515-amino-acid chain: 2-isopropylmalate synthase (515 aa).

In terms of domain architecture, Pyruvate carboxyltransferase spans leucine 5–valine 268. Positions 14, 202, 204, and 239 each coordinate Mn(2+). Residues lysine 396–alanine 515 form a regulatory domain region.

It belongs to the alpha-IPM synthase/homocitrate synthase family. LeuA type 1 subfamily. In terms of assembly, homodimer. It depends on Mn(2+) as a cofactor.

It is found in the cytoplasm. The enzyme catalyses 3-methyl-2-oxobutanoate + acetyl-CoA + H2O = (2S)-2-isopropylmalate + CoA + H(+). It functions in the pathway amino-acid biosynthesis; L-leucine biosynthesis; L-leucine from 3-methyl-2-oxobutanoate: step 1/4. Catalyzes the condensation of the acetyl group of acetyl-CoA with 3-methyl-2-oxobutanoate (2-ketoisovalerate) to form 3-carboxy-3-hydroxy-4-methylpentanoate (2-isopropylmalate). The polypeptide is 2-isopropylmalate synthase (Burkholderia pseudomallei (strain 1106a)).